The sequence spans 390 residues: Putative gustatory receptor 36c (390 aa).

The Cytoplasmic portion of the chain corresponds to 1 to 4 (MDLE). A helical membrane pass occupies residues 5–25 (SFLLGAVYYYGLFIGLSNFEF). At 26 to 36 (DWNTGRVFTKK) the chain is on the extracellular side. The helical transmembrane segment at 37-57 (WSTLYAIALDSCIFALYIYHW) threads the bilayer. At 58-75 (TGNTNIVNAIFGRANMLH) the chain is on the cytoplasmic side. A helical membrane pass occupies residues 76 to 96 (EYVVAILTGLRIVTGLFTLIL). Residues 97 to 132 (RWYQRCKMMDLASKVVRMYVARPQVRRMSRWGILTK) lie on the Extracellular side of the membrane. The helical transmembrane segment at 133–153 (FIFGSITDGLQMAMVLSAMGS) threads the bilayer. Residues 154–165 (VDSQFYLGLGLQ) are Cytoplasmic-facing. Residues 166–186 (YWMFVILNMAMMQQHMIMLFV) form a helical membrane-spanning segment. The Extracellular portion of the chain corresponds to 187–254 (RTQFQLINTE…MEEVFGIQGA (68 aa)). The chain crosses the membrane as a helical span at residues 255–275 (MTYGGYYLSSVGTCYLAYSIL). The Cytoplasmic portion of the chain corresponds to 276 to 288 (KHGYENLSMTLST). The helical transmembrane segment at 289–309 (VILAYSWCFFYYLDGMLNLSV) threads the bilayer. Residues 310–390 (MLHVQDDYWE…FLIQYDIEHF (81 aa)) are Extracellular-facing.

Belongs to the insect chemoreceptor superfamily. Gustatory receptor (GR) family. Gr22e subfamily. As to expression, expressed in neurons of the terminal external chemosensory organ of larvae.

It localises to the cell membrane. In terms of biological role, probable gustatory receptor which mediates acceptance or avoidance behavior, depending on its substrates. The protein is Putative gustatory receptor 36c (Gr36c) of Drosophila melanogaster (Fruit fly).